Here is a 575-residue protein sequence, read N- to C-terminus: uncharacterized protein (575 aa).

Its subcellular location is the cytoplasm. The protein localises to the cytoskeleton. It localises to the microtubule organizing center. It is found in the spindle pole body. This is an uncharacterized protein from Schizosaccharomyces pombe (strain 972 / ATCC 24843) (Fission yeast).